The following is a 1005-amino-acid chain: Translation initiation factor IF-2 (1005 aa).

Disordered stretches follow at residues 54–337 (KYVP…RRPQ) and 368–414 (PKPK…PTSV). Residues 58–73 (SPSTHSMPPTRPTSHS) show a composition bias toward polar residues. Positions 75 to 86 (PLPPQPGKPQPK) are enriched in pro residues. A compositionally biased stretch (polar residues) spans 146 to 157 (GSNSPSHSESTP). Low complexity-rich tracts occupy residues 189–198 (PSPAAMAGRA) and 222–240 (VESA…PRAE). Residues 258–274 (PRSETSEDGARRGEKLV) are compositionally biased toward basic and acidic residues. A compositionally biased stretch (basic residues) spans 392–401 (GGRKLSRRDR). The 174-residue stretch at 495–668 (RRPPVVTIMG…LLVSEVEDLY (174 aa)) folds into the tr-type G domain. The segment at 504–511 (GHVDHGKT) is G1. 504–511 (GHVDHGKT) provides a ligand contact to GTP. The interval 529–533 (GITQH) is G2. The tract at residues 554-557 (DTPG) is G3. GTP-binding positions include 554–558 (DTPGH) and 608–611 (NKID). Positions 608–611 (NKID) are G4. The tract at residues 644 to 646 (SAI) is G5.

Belongs to the TRAFAC class translation factor GTPase superfamily. Classic translation factor GTPase family. IF-2 subfamily.

It is found in the cytoplasm. In terms of biological role, one of the essential components for the initiation of protein synthesis. Protects formylmethionyl-tRNA from spontaneous hydrolysis and promotes its binding to the 30S ribosomal subunits. Also involved in the hydrolysis of GTP during the formation of the 70S ribosomal complex. The protein is Translation initiation factor IF-2 of Cyanothece sp. (strain PCC 7425 / ATCC 29141).